Here is a 361-residue protein sequence, read N- to C-terminus: tRNA-specific 2-thiouridylase MnmA (361 aa).

ATP-binding positions include 8-15 and Met-34; that span reads GMSGGVDS. Residues 94–96 are interaction with target base in tRNA; the sequence is NPD. The active-site Nucleophile is Cys-99. Residues Cys-99 and Cys-195 are joined by a disulfide bond. Gly-123 is a binding site for ATP. An interaction with tRNA region spans residues 145 to 147; that stretch reads KDQ. Cys-195 serves as the catalytic Cysteine persulfide intermediate. Residues 307-308 form an interaction with tRNA region; it reads RY.

The protein belongs to the MnmA/TRMU family.

It is found in the cytoplasm. The enzyme catalyses S-sulfanyl-L-cysteinyl-[protein] + uridine(34) in tRNA + AH2 + ATP = 2-thiouridine(34) in tRNA + L-cysteinyl-[protein] + A + AMP + diphosphate + H(+). Its function is as follows. Catalyzes the 2-thiolation of uridine at the wobble position (U34) of tRNA, leading to the formation of s(2)U34. This is tRNA-specific 2-thiouridylase MnmA from Legionella pneumophila (strain Paris).